The primary structure comprises 178 residues: ATP-dependent protease subunit HslV (178 aa).

Residue threonine 7 is part of the active site. Glycine 162, cysteine 165, and threonine 168 together coordinate Na(+).

It belongs to the peptidase T1B family. HslV subfamily. In terms of assembly, a double ring-shaped homohexamer of HslV is capped on each side by a ring-shaped HslU homohexamer. The assembly of the HslU/HslV complex is dependent on binding of ATP.

The protein localises to the cytoplasm. It catalyses the reaction ATP-dependent cleavage of peptide bonds with broad specificity.. Its activity is regulated as follows. Allosterically activated by HslU binding. Functionally, protease subunit of a proteasome-like degradation complex believed to be a general protein degrading machinery. The chain is ATP-dependent protease subunit HslV from Ralstonia nicotianae (strain ATCC BAA-1114 / GMI1000) (Ralstonia solanacearum).